The primary structure comprises 131 residues: Small ribosomal subunit protein uS8 (131 aa).

The protein belongs to the universal ribosomal protein uS8 family. In terms of assembly, part of the 30S ribosomal subunit. Contacts proteins S5 and S12.

Functionally, one of the primary rRNA binding proteins, it binds directly to 16S rRNA central domain where it helps coordinate assembly of the platform of the 30S subunit. This chain is Small ribosomal subunit protein uS8, found in Porphyromonas gingivalis (strain ATCC 33277 / DSM 20709 / CIP 103683 / JCM 12257 / NCTC 11834 / 2561).